The sequence spans 453 residues: Choline kinase alpha (453 aa).

A disordered region spans residues Cys22–Pro81. Residues Ala55–Pro73 are compositionally biased toward pro residues. Ser71 carries the phosphoserine modification. ATP is bound by residues Arg113–Met119, Arg142, and Gln203–Arg209. Gly115 to Ser117 is a binding site for phosphocholine. Position 243 is an N6-acetyllysine (Lys243). Ser275 is subject to Phosphoserine. Residues Gln304 and Asp326 each contribute to the ATP site.

It belongs to the choline/ethanolamine kinase family. As to quaternary structure, homodimer. Heterodimer with CHKB. In terms of assembly, monomer; acetylation by KAT5 promotes dissociation of the homodimer and monomerization. Post-translationally, phosphorylated at Ser-275 by AMPK in response to glucose deprivation, leading to localization to lipid droplets. Acetylated by KAT5 at Lys-243 following phosphorylation by AMPK, leading to monomerization and conversion into a tyrosine-protein kinase. In terms of tissue distribution, expressed ubiquitously with the highest level in testis.

It is found in the cytoplasm. The protein localises to the cytosol. The protein resides in the lipid droplet. It catalyses the reaction choline + ATP = phosphocholine + ADP + H(+). The enzyme catalyses ethanolamine + ATP = phosphoethanolamine + ADP + H(+). The catalysed reaction is L-tyrosyl-[protein] + ATP = O-phospho-L-tyrosyl-[protein] + ADP + H(+). Its pathway is phospholipid metabolism; phosphatidylcholine biosynthesis; phosphocholine from choline: step 1/1. It participates in phospholipid metabolism; phosphatidylethanolamine biosynthesis; phosphatidylethanolamine from ethanolamine: step 1/3. Functionally, plays a key role in phospholipid biosynthesis by catalyzing the phosphorylation of free choline to phosphocholine, the first step in phosphatidylcholine biosynthesis. Also phosphorylates ethanolamine, thereby contributing to phosphatidylethanolamine biosynthesis. Has higher activity with choline. Its function is as follows. This isoform plays a key role in lipolysis of lipid droplets following glucose deprivation. In response to glucose deprivation, phosphorylated by AMPK, promoting localization to lipid droplets. Phosphorylation is followed by acetylation by KAT5, leading to dissociation of the homodimer into a monomer. Monomeric CHKA isoform 1 is converted into a tyrosine-protein kinase, which phosphorylates lipid droplet structural proteins PLIN2 and PLIN3, leading to lipolysis of lipid droplets. The sequence is that of Choline kinase alpha (Chka) from Mus musculus (Mouse).